Consider the following 316-residue polypeptide: Pantothenate kinase (316 aa).

Position 95–102 (95–102 (GSVAVGKS)) interacts with ATP.

Belongs to the prokaryotic pantothenate kinase family.

Its subcellular location is the cytoplasm. The enzyme catalyses (R)-pantothenate + ATP = (R)-4'-phosphopantothenate + ADP + H(+). Its pathway is cofactor biosynthesis; coenzyme A biosynthesis; CoA from (R)-pantothenate: step 1/5. The chain is Pantothenate kinase from Shewanella sp. (strain MR-7).